A 1865-amino-acid polypeptide reads, in one-letter code: Dedicator of cytokinesis protein 1 (1865 aa).

The SH3 domain occupies 9–70 (REEKYGVAFY…PASYIHLKEA (62 aa)). The C2 DOCK-type domain occupies 425 to 609 (RNDIYVTLVQ…DSFQISTLVC (185 aa)). The DOCKER domain occupies 1207–1617 (YKEIEREEMY…VEKQYGVRTM (411 aa)). Residues 1613–1723 (GVRTMPSGLD…FKPADSSLQQ (111 aa)) are disordered. Low complexity predominate over residues 1639-1664 (PSSSRPLSVASVSSFSSDSTPSRPGS). Over residues 1680–1694 (RSQDKLDKDDPDKEK) the composition is skewed to basic and acidic residues. Serine 1681 is subject to Phosphoserine. Residues 1687–1695 (KDDPDKEKK) are phosphoinositide-binding. Residues 1695-1704 (KDKKKEKRNS) show a composition bias toward basic residues. Residues 1705-1716 (KHQEIFDKEFKP) show a composition bias toward basic and acidic residues. Residues serine 1743, serine 1756, serine 1761, and serine 1764 each carry the phosphoserine modification. Disordered regions lie at residues 1753-1778 (RRFSVSPASPSSQQTPPPVTPRAKLS) and 1801-1865 (PLPL…GIVQ). Low complexity predominate over residues 1756–1766 (SVSPASPSSQQ). A phosphothreonine mark is found at threonine 1767 and threonine 1772. The interval 1793 to 1819 (MDVADVPPPLPLKGNMADYGNLMENQD) is interaction with NCK2 second and third SH3 domain (minor). The short motif at 1799–1805 (PPPLPLK) is the SH3-binding; interaction with CRK element. An interaction with NCK2 third SH3 domain (major) region spans residues 1820–1836 (MMVSPTSPPPPPPQRQQ). Residues 1825 to 1851 (TSPPPPPPQRQQPPPLPSKTPPPPPPK) show a composition bias toward pro residues. An interaction with NCK2 (minor) region spans residues 1837–1852 (PPPLPSKTPPPPPPKT). The short motif at 1838-1843 (PPLPSK) is the SH3-binding; interaction with CRK element. A Phosphoserine modification is found at serine 1858.

This sequence belongs to the DOCK family. Interacts with the SH3 domains of CRK and NCK2 via multiple sites. Interacts with nucleotide-free RAC1 via its DOCKER domain. Interacts with ELMO1, ELMO2 and probably ELMO3 via its SH3 domain. Interacts with RAC1. Interacts with ELMO1 and ADGRB1. Identified in a complex with AUTS2 and ELMO2.

The protein localises to the cytoplasm. It is found in the membrane. Functionally, involved in cytoskeletal rearrangements required for phagocytosis of apoptotic cells and cell motility. Along with DOCK1, mediates CRK/CRKL regulation of epithelial and endothelial cell spreading and migration on type IV collagen. Functions as a guanine nucleotide exchange factor (GEF), which activates Rac Rho small GTPases by exchanging bound GDP for free GTP. Its GEF activity may be enhanced by ELMO1. This chain is Dedicator of cytokinesis protein 1 (Dock1), found in Mus musculus (Mouse).